A 411-amino-acid chain; its full sequence is Protein phosphatase 1 regulatory subunit 36 (411 aa).

As to quaternary structure, interacts with PPP1CA.

In terms of biological role, inhibits phosphatase activity of protein phosphatase 1 (PP1) complexes. The sequence is that of Protein phosphatase 1 regulatory subunit 36 (Ppp1r36) from Rattus norvegicus (Rat).